Reading from the N-terminus, the 82-residue chain is Acyl carrier protein (82 aa).

Positions 3–81 constitute a Carrier domain; the sequence is SSEQEILAGL…DAVTYIAGAQ (79 aa). The residue at position 41 (S41) is an O-(pantetheine 4'-phosphoryl)serine.

This sequence belongs to the acyl carrier protein (ACP) family. 4'-phosphopantetheine is transferred from CoA to a specific serine of apo-ACP by AcpS. This modification is essential for activity because fatty acids are bound in thioester linkage to the sulfhydryl of the prosthetic group.

Its subcellular location is the cytoplasm. The protein operates within lipid metabolism; fatty acid biosynthesis. Functionally, carrier of the growing fatty acid chain in fatty acid biosynthesis. This is Acyl carrier protein from Beutenbergia cavernae (strain ATCC BAA-8 / DSM 12333 / CCUG 43141 / JCM 11478 / NBRC 16432 / NCIMB 13614 / HKI 0122).